The following is a 182-amino-acid chain: Dirigent protein 5 (182 aa).

Positions Met-1–Ser-23 are cleaved as a signal peptide. Residues Cys-35 and Cys-181 are joined by a disulfide bond. N-linked (GlcNAc...) asparagine glycans are attached at residues Asn-54 and Asn-118.

It belongs to the plant dirigent protein family. As to quaternary structure, homodimer. In terms of tissue distribution, confined to shoot meristem, vascular region of cotyledons and siliques abscission zone.

It is found in the secreted. Its subcellular location is the extracellular space. The protein localises to the apoplast. Dirigent proteins impart stereoselectivity on the phenoxy radical-coupling reaction, yielding optically active lignans from two molecules of coniferyl alcohol in the biosynthesis of lignans, flavonolignans, and alkaloids and thus plays a central role in plant secondary metabolism. Enantiocomplementary dirigent protein that mediates the laccase-catalyzed enantioselective oxidative phenol coupling of (E)-coniferyl alcohol to (-)-pinoresinol. The protein is Dirigent protein 5 (DIR5) of Arabidopsis thaliana (Mouse-ear cress).